Consider the following 366-residue polypeptide: Zinc finger CCCH domain-containing protein 11 (366 aa).

The disordered stretch occupies residues 43–66 (LHQAVQPKPDPTKTAAKKKKEEEK). Residues 54–79 (TKTAAKKKKEEEKAREKELNDLFKVA) are a coiled coil. C3H1-type zinc fingers lie at residues 90-117 (DPKS…HDLN) and 160-198 (KPTD…HALP). Positions 208–234 (KALLEEESEKIAIEDEIEDQRKKVKTT) form a coiled coil. Residues 293 to 338 (YERQEESEANEEPSNKNQDEGPSSSTSNGKEVEESDDEDINIDDDL) are disordered. Polar residues predominate over residues 312-321 (EGPSSSTSNG). Acidic residues predominate over residues 325-338 (EESDDEDINIDDDL).

This is Zinc finger CCCH domain-containing protein 11 from Oryza sativa subsp. japonica (Rice).